A 121-amino-acid chain; its full sequence is Large ribosomal subunit protein bL12 (121 aa).

It belongs to the bacterial ribosomal protein bL12 family. As to quaternary structure, homodimer. Part of the ribosomal stalk of the 50S ribosomal subunit. Forms a multimeric L10(L12)X complex, where L10 forms an elongated spine to which 2 to 4 L12 dimers bind in a sequential fashion. Binds GTP-bound translation factors.

In terms of biological role, forms part of the ribosomal stalk which helps the ribosome interact with GTP-bound translation factors. Is thus essential for accurate translation. The protein is Large ribosomal subunit protein bL12 of Baumannia cicadellinicola subsp. Homalodisca coagulata.